We begin with the raw amino-acid sequence, 212 residues long: uncharacterized protein (212 aa).

The protein belongs to the mimivirus R683/R861 family.

This is an uncharacterized protein from Acanthamoeba polyphaga (Amoeba).